The sequence spans 443 residues: Flavastacin (443 aa).

An N-terminal signal peptide occupies residues 1 to 15 (MTRKLLILSGCLILA). Residues 16-91 (LNSCKSDMET…ANPDISTVER (76 aa)) constitute a propeptide, activation peptide. Positions 92–289 (STIVSSFIKT…AGINHLYGPV (198 aa)) constitute a Peptidase M12A domain. Position 189 (H189) interacts with Zn(2+). E190 is an active-site residue. 2 residues coordinate Zn(2+): H193 and H199. Residues 297–440 (GTYTLTTSLA…PYTKQRFTLT (144 aa)) enclose the Ricin B-type lectin domain. S355 carries an O-linked (Man...) serine glycan.

Zn(2+) is required as a cofactor. O-linked glycan consists of the Man, GlcNAc, GlcU, Glc, GlcU, Rha, Man heptasaccharide.

It catalyses the reaction Hydrolyzes polypeptides on the amino-side of Asp in -Xaa-|-Asp-. Acts very slowly on -Xaa-|-Glu.. In terms of biological role, zinc metallendopeptidase that cleaves preferentially on N-terminal side of aspartate-containing substrates. The polypeptide is Flavastacin (Elizabethkingia meningoseptica (Chryseobacterium meningosepticum)).